Reading from the N-terminus, the 92-residue chain is Protein OP-ORF (92 aa).

The stretch at 53 to 82 forms a coiled coil; it reads KMLAATISILEEEVTELVTELNNTTNLTAK.

This Rice dwarf virus (isolate Fujian) (RDV) protein is Protein OP-ORF.